The sequence spans 214 residues: Membrane-spanning 4-domains subfamily A member 3 (214 aa).

Positions 1-31 (MASHEVDNAELGSASAHGTPGSEAGPEELNT) are disordered. Residues 1–49 (MASHEVDNAELGSASAHGTPGSEAGPEELNTSVYQPIDGSPDYQKAKLQ) lie on the Cytoplasmic side of the membrane. A helical membrane pass occupies residues 50–70 (VLGAIQILNAAMILALGVFLG). Residues 71–81 (SLQYPYHFQKH) are Extracellular-facing. A helical membrane pass occupies residues 82–102 (FFFFTFYTGYPIWGAVFFCSS). The Cytoplasmic segment spans residues 103 to 124 (GTLSVVAGIKPTRTWIQNSFGM). The chain crosses the membrane as a helical span at residues 125 to 145 (NIASATIALVGTAFLSLNIAV). The Extracellular segment spans residues 146–175 (NIQSLRSCHSSSESPDLCNYMGSISNGMVS). Residues 176–196 (LLLILTLLELCVTISTIAMWC) traverse the membrane as a helical segment. Residues 197 to 214 (NANCCNSREEISSPPNSV) lie on the Cytoplasmic side of the membrane.

It belongs to the MS4A family. As to quaternary structure, interacts with CDKN3. Interacts with CDKN3-CDK2 complexes through its binding to CDKN3; this interaction facilitates dissociation of cyclin A from CDKN3-CDK2 complexes. As to expression, expressed specifically in hematopoietic cells and tissues.

The protein localises to the endomembrane system. The protein resides in the cytoplasm. Its subcellular location is the perinuclear region. Hematopoietic modulator for the G1-S cell cycle transition. Modulates the level of phosphorylation of cyclin-dependent kinase 2 (CDK2) through its direct binding to cyclin-dependent kinase inhibitor 3 (CDKN3/KAP). This is Membrane-spanning 4-domains subfamily A member 3 (MS4A3) from Homo sapiens (Human).